Reading from the N-terminus, the 1380-residue chain is DNA-directed RNA polymerase subunit beta (1380 aa).

It belongs to the RNA polymerase beta chain family. As to quaternary structure, the RNAP catalytic core consists of 2 alpha, 1 beta, 1 beta' and 1 omega subunit. When a sigma factor is associated with the core the holoenzyme is formed, which can initiate transcription.

It carries out the reaction RNA(n) + a ribonucleoside 5'-triphosphate = RNA(n+1) + diphosphate. Functionally, DNA-dependent RNA polymerase catalyzes the transcription of DNA into RNA using the four ribonucleoside triphosphates as substrates. The sequence is that of DNA-directed RNA polymerase subunit beta from Ehrlichia canis (strain Jake).